A 934-amino-acid chain; its full sequence is Complement component C6 (934 aa).

An N-terminal signal peptide occupies residues 1–21 (MARRSVLYFILLNALINKGQA). Intrachain disulfides connect Cys-22–Cys-61, Cys-24–Cys-65, Cys-35–Cys-73, Cys-39–Cys-78, Cys-82–Cys-117, Cys-93–Cys-127, Cys-96–Cys-133, Cys-140–Cys-151, Cys-146–Cys-164, Cys-158–Cys-173, and Cys-180–Cys-218. 2 consecutive TSP type-1 domains span residues 22–79 (CFCD…QRCP) and 81–134 (NCLL…KLCK). A glycan (C-linked (Man) tryptophan) is linked at Trp-29. Trp-32 carries C-linked (Man) tryptophan; partial glycosylation. Residue Thr-38 is glycosylated (O-linked (Fuc...) threonine). Trp-90 carries a C-linked (Man) tryptophan; partial glycan. An LDL-receptor class A domain is found at 138–175 (ADCKNKFRCDSGRCIARKLECNGENDCGDNSDERDCGR). Residues Leu-156, Asn-159, Glu-161, Asp-163, Asp-169, and Glu-170 each contribute to the Ca(2+) site. In terms of domain architecture, MACPF spans 176–522 (TKAVCTRKYN…EYAAKFDPCQ (347 aa)). The beta stranded transmembrane segment at 278 to 290 (SFSVPIFYSSKRS) threads the bilayer. An N-linked (GlcNAc...) asparagine glycan is attached at Asn-324. O-linked (Fuc...) threonine glycosylation is present at Thr-392. 16 disulfide bridges follow: Cys-399/Cys-420, Cys-499/Cys-623, Cys-521/Cys-570, Cys-523/Cys-539, Cys-526/Cys-541, Cys-543/Cys-552, Cys-577/Cys-611, Cys-589/Cys-601, Cys-644/Cys-686, Cys-672/Cys-699, Cys-704/Cys-746, Cys-732/Cys-761, Cys-773/Cys-823, Cys-784/Cys-801, Cys-786/Cys-837, and Cys-793/Cys-816. The beta stranded transmembrane segment at 402–415 (IETKKRVLFAKKTK) threads the bilayer. The region spanning 523 to 553 (CAPCPNNGRPTLSGTECLCVCQSGTYGENCE) is the EGF-like domain. The TSP type-1 3 domain maps to 565–612 (DGQWGCWSSWSTCDATYKRSRTRECNNPAPQRGGKRCEGEKRQEEDCT). Residues Trp-568, Trp-571, and Trp-574 are each glycosylated (C-linked (Man) tryptophan; partial). CCP stretches follow at residues 611 to 688 (CTFS…RCLP) and 689 to 765 (DGTW…EKDT). Sushi domains follow at residues 642–701 (SGCP…ECQR) and 702–763 (TECI…TCEK). Residues 642-934 (SGCPQPVPPE…EILHPGKCLA (293 aa)) are C5b-binding domain. A factor I module (FIM) 1 region spans residues 766–840 (LTKLKGHCQL…FLHIGSCQDG (75 aa)). Residues 780 to 839 (SGSECICMSPEEDCSHHSEDLCVFDTDSNDYFTSPACKFLAEKCLNNQQLHFLHIGSCQD) enclose the Kazal-like 1 domain. Residue Asn-855 is glycosylated (N-linked (GlcNAc...) asparagine). The tract at residues 858-934 (KKESCGYDTC…EILHPGKCLA (77 aa)) is factor I module (FIM) 2. Cystine bridges form between Cys-862/Cys-873, Cys-867/Cys-919, Cys-880/Cys-897, Cys-882/Cys-932, and Cys-888/Cys-912. Positions 876–934 (STSKCVCLLPPQCFKGGNQLYCVKMGSSTSEKTLNICEVGTIRCANRKMEILHPGKCLA) constitute a Kazal-like 2 domain.

Belongs to the complement C6/C7/C8/C9 family. In terms of assembly, component of the membrane attack complex (MAC), composed of complement C5b, C6, C7, C8A, C8B, C8G and multiple copies of the pore-forming subunit C9. Post-translationally, all cysteine residues are assumed to be cross-linked to one another. Individual modules containing an even number of conserved cysteine residues are supposed to have disulfide linkages only within the same module.

It localises to the secreted. It is found in the target cell membrane. Membrane attack complex (MAC) assembly is inhibited by CD59, thereby protecting self-cells from damage during complement activation. MAC assembly is also inhibited by clusterin (CLU) chaperones that inhibit polymerization of C9. Its function is as follows. Component of the membrane attack complex (MAC), a multiprotein complex activated by the complement cascade, which inserts into a target cell membrane and forms a pore, leading to target cell membrane rupture and cell lysis. The MAC is initiated by proteolytic cleavage of C5 into complement C5b in response to the classical, alternative, lectin and GZMK complement pathways. The complement pathways consist in a cascade of proteins that leads to phagocytosis and breakdown of pathogens and signaling that strengthens the adaptive immune system. Together with component C5b, involved in MAC complex assembly: complement C5b and C6 associate with the outer leaflet of target cell membrane, reducing the energy for membrane bending. The sequence is that of Complement component C6 from Homo sapiens (Human).